The following is a 91-amino-acid chain: Islet amyloid polypeptide (91 aa).

Residues 1 to 22 form the signal peptide; sequence MCLLQLPVVLLLLSAALNTLKA. A propeptide spanning residues 23–34 is cleaved from the precursor; that stretch reads TPIASDTDHRVD. C38 and C43 are disulfide-bonded. Y73 bears the Tyrosine amide mark. Residues 77 to 91 constitute a propeptide that is removed on maturation; sequence NAEVVDVELLHYLPL.

This sequence belongs to the calcitonin family. As to quaternary structure, can form homodimers. Interacts with IDE and INS. Interaction with INS inhibits homodimerization and fibril formation.

It localises to the secreted. In terms of biological role, amylin/IAPP is a glucoregulatory peptide hormone that plays an important role in the regulation of energy homeostasis. Selectively inhibits insulin-stimulated glucose utilization and glycogen deposition in muscle, while not affecting adipocyte glucose metabolism. IAPP function is mediated by the CALCR-RAMPs (AMYRs) receptor complexes. Amylin can also bind CALCR receptor in the absence of RAMPs, although it is more selective for AMYRs. This Octodon degus (Degu) protein is Islet amyloid polypeptide (IAPP).